The following is a 264-amino-acid chain: Neurexophilin-2 (264 aa).

Residues Met1–Ser22 form the signal peptide. Residues Lys23–Ile90 are II. Asn86, Asn139, Asn149, and Asn155 each carry an N-linked (GlcNAc...) asparagine glycan. The interval Gln91–Phe169 is III. Residues Glu170 to Glu178 are IV (linker domain). The v (Cys-rich) stretch occupies residues Thr179–Gly264.

Belongs to the neurexophilin family. Post-translationally, may be proteolytically processed at the boundary between the N-terminal non-conserved and the central conserved domain in neuron-like cells. Expressed in brain and kidney.

It is found in the secreted. In terms of biological role, may be signaling molecules that resemble neuropeptides and that act by binding to alpha-neurexins and possibly other receptors. This is Neurexophilin-2 (NXPH2) from Homo sapiens (Human).